A 352-amino-acid polypeptide reads, in one-letter code: Minor capsid protein VP2 (352 aa).

Glycine 2 carries the N-myristoyl glycine; by host lipid modification. Residues 273 to 308 are D1; sequence SGEFIEKFEAPGGANQRTAPQWMLPLLLGLYGSVTS. Residues 290–310 traverse the membrane as a helical segment; the sequence is TAPQWMLPLLLGLYGSVTSAL. A disordered region spans residues 313-352; the sequence is YEDGPNKKKRKLSRGSSQKTKGTSASAKARHKRRNRSSRS. The segment at 313-352 is DNA-binding; the sequence is YEDGPNKKKRKLSRGSSQKTKGTSASAKARHKRRNRSSRS. The short motif at 316 to 324 is the Nuclear localization signal element; it reads GPNKKKRKL. The segment covering 326-338 has biased composition (polar residues); sequence RGSSQKTKGTSAS. Positions 340–352 are enriched in basic residues; that stretch reads KARHKRRNRSSRS.

It belongs to the polyomaviruses capsid protein VP2 family. In terms of assembly, forms homooligomers, and heterooligomers with VP3 in the endoplasmic reticulum membrane. Interacts (via D1 domain) with VP1. As to quaternary structure, interacts (via D1 domain) with VP1. Interacts (via C-terminus) with host SP1, this is probably also the case for VP2; this interaction represses SP1 activation of the SV40 early promoter and participates in virion assembly. Interacts (via nuclear localization signal) with host importin alpha2-beta heterodimer. Oligomerizes with VP3 in the nucleus.

The protein localises to the virion. Its subcellular location is the host nucleus. It is found in the host endoplasmic reticulum. It localises to the host endoplasmic reticulum membrane. Structural protein that resides within the core of the capsid surrounded by 72 VP1 pentamers. Following virus endocytosis and trafficking to the endoplasmic reticulum, VP2 and VP3 form oligomers and integrate into the endoplasmic reticulum membrane. Heterooligomer VP2-VP3 may create a viroporin for transporting the viral genome across the endoplasmic reticulum membrane to the cytoplasm. Nuclear entry of the viral DNA involves the selective exposure and importin recognition of VP2 or VP3 nuclear localization signal (shared C-terminus). Plays a role in virion assembly within the nucleus in particular through a DNA-binding domain located in the C-terminal region. An N-terminal myristoylation suggests a scaffold function for virion assembly. The viral progenies exit the cells by lytic release. Isoform VP2 may repress SP1 activation of the SV40 early promoter, via specific protein-protein and protein-DNA interactions. Its function is as follows. Structural protein that resides within the core of the capsid surrounded by 72 VP1 pentamers. Following virus entry, VP2 and VP3 form oligomers and integrate into the endoplasmic reticulum membrane. Heterooligomer VP2-VP3 may create a viroporin for transporting the viral genome across the endoplasmic reticulum membrane. Essential for focus formation and virus endoplasmic reticulum-to-cytosol membrane transport, required to recruit selective cellular components to the foci in the ER membrane. Nuclear entry of the viral DNA involves the selective exposure and importin recognition of VP2 or VP3 nuclear localization signal (shared C-terminus). Isoform VP3 represses SP1 activation of the SV40 early promoter, via specific protein-protein and protein-DNA interactions. SP1 additionally participates in recruiting VP3 to the SV40 minichromosome during SV40 assembly. Plays a role in virion assembly within the nucleus. May initiate host cell lysis when associated with VP4. Functionally, viroporin inducing perforation of cellular membranes to trigger virus progeny release. Forms pores of 3 nm inner diameter. VP4 is expressed about 24 hours after the late structural proteins and is not incorporated into the mature virion. This Simian virus 40 (SV40) protein is Minor capsid protein VP2.